The primary structure comprises 566 residues: MAGRRLTWISEFIVGALDSDKYPLVKWLDRSTGTFLAPAARNDVIPLDSLQFFIDFKRECLSKGLHPRDLLGSPITAFGKICTTSRRLRRLPGEEYEVVQGINCRRWRLLCAEVKECWWCVHARTHLHSGSSLWEILYQHSVRLEKHRRRPRPFVGENSDSSEEDHPAFCDVPVTQTGAESEDSGDEGPSTRHSASGVQPVDDANADSPGSGDEGPSTRHSDSQPPPADETTVHTDNVEDDLTLLDKESACALMYHVGQEMDMLMRAMCDEDLFDLLGIPEDVIATSQPGGDTDASGVVTEGSIAASAVGAGVEDVYLAGALEAQNVAGEYVLEISDEEVDDGAGLPPASRRRPVVGEFLWDDGPRRHERPTTRRIRHRKLRSAYYRVARPPVMITDRLGVEVFYFGRPAMSLEVERKVFILCSQNPLADISHSCLHSRKGLRVLLPKPDDNNTGPGDVNLLAAVLRSFASGLVIVSLRSGIYVKNLCKSTVLYHGNNPPKKFGVICGLSSRAVLDVFNVAQYRIQGHEHIKKTTVFIGGDPTSAEQFDMVPLVIKLRLRSVTCDD.

2 disordered regions span residues 151–170 (PRPF…PAFC) and 176–236 (QTGA…VHTD).

The protein belongs to the IRF family. Interacts with host SKP2. Interacts with host USP7.

Plays a role in the inhibition of host immune response. Interferes with the transactivating potential of cellular IRFs IRF3 and IRF7 that play a critical role in the induction of IFNA and IFNB genes. Additionally, interferes with surface major histocompatibility complex class II (MHC-II) antigen presentation. The protein is Viral IRF3-like protein (vIRF-3) of Human herpesvirus 8 type P (isolate GK18) (HHV-8).